The primary structure comprises 389 residues: Chalcone synthase 1 (389 aa).

Residue Cys164 is part of the active site.

The protein belongs to the thiolase-like superfamily. Chalcone/stilbene synthases family.

The catalysed reaction is (E)-4-coumaroyl-CoA + 3 malonyl-CoA + 3 H(+) = 2',4,4',6'-tetrahydroxychalcone + 3 CO2 + 4 CoA. It functions in the pathway secondary metabolite biosynthesis; flavonoid biosynthesis. In terms of biological role, the primary product of this enzyme is 4,2',4',6'-tetrahydroxychalcone (also termed naringenin-chalcone or chalcone) which can under specific conditions spontaneously isomerize into naringenin. The sequence is that of Chalcone synthase 1 (CHS1) from Solanum lycopersicum (Tomato).